The primary structure comprises 176 residues: Macro domain-containing protein LMOf2365_2748 (176 aa).

In terms of domain architecture, Macro spans 1 to 175 (MEITVVKGDI…LYNKLINSEV (175 aa)).

Belongs to the MacroD-type family.

This chain is Macro domain-containing protein LMOf2365_2748, found in Listeria monocytogenes serotype 4b (strain F2365).